We begin with the raw amino-acid sequence, 162 residues long: NADH-quinone oxidoreductase subunit I 2 (162 aa).

4Fe-4S ferredoxin-type domains follow at residues Leu52–Gly82 and Val93–Asn122. [4Fe-4S] cluster contacts are provided by Cys62, Cys65, Cys68, Cys72, Cys102, Cys105, Cys108, and Cys112.

It belongs to the complex I 23 kDa subunit family. NDH-1 is composed of 14 different subunits. Subunits NuoA, H, J, K, L, M, N constitute the membrane sector of the complex. Requires [4Fe-4S] cluster as cofactor.

The protein resides in the cell inner membrane. It carries out the reaction a quinone + NADH + 5 H(+)(in) = a quinol + NAD(+) + 4 H(+)(out). In terms of biological role, NDH-1 shuttles electrons from NADH, via FMN and iron-sulfur (Fe-S) centers, to quinones in the respiratory chain. The immediate electron acceptor for the enzyme in this species is believed to be ubiquinone. Couples the redox reaction to proton translocation (for every two electrons transferred, four hydrogen ions are translocated across the cytoplasmic membrane), and thus conserves the redox energy in a proton gradient. The sequence is that of NADH-quinone oxidoreductase subunit I 2 from Rhodopseudomonas palustris (strain HaA2).